Reading from the N-terminus, the 769-residue chain is MTEKDWIIQYDKKEVGKRSYGQESLMSLGNGYLGLRGAPLWSTCSDNHYPGLYVAGVFNRTSTEVAGHDVINEDMVNWPNPQLIKVYIDGELVDFEASVEKQATIDFKNALQIERYQVKLAKGNLTLVTTKFVDPINFHDFGFVGEIIADFSCKLRIETFTDGSVLNQNVERYRAFDSKEFEVTKISKGLLVAKTRTSEIELAIASKSFLNGLAFPKIDSENDEILAEAIEIDLQKNQEVQFDKTIVIASSYESKNPVEFVLTELSATSVSKIQENNTNYWEKVWSDADIVIESDHEDLQRMVRMNIFHIRQAAQHGANQFLDASVGSRGLTGEGYRGHIFWDEIFVLPYYAANEPETARDLLLYRINRLTAAQENAKVDGEKGAMFPWQSGLIGDEQSQFVHLNTVNNEWEPDNSRRQRHVSLAIVYNLWIYSQLTEDESILTDGGLDLIIETTKFWLNKAELGDDGRYHIDGVMGPDEYHEAYPGQEGGICDNAYTNLMLTWQLNWLTELSEKGFEIPKELLEKAQKVRKKLYLDIDENGVIAQYAKYFELKEVDFAAYEAKYGDIHRIDRLMKAEGISPDEYQVAKQADTLMLIYNLGQEHVTKLVKQLAYELPENWLKVNRDYYLARTVHGSTTSRPVFAGIDVKLGDFDEALDFLITAIGSDYYDIQGGTTAEGVHIGVMGETLEVIQNEFAGLSLREGQFAIAPYLPKSWTKLKFNQIFRGTKVEILIENGQLLLTASADLLTKVYDDEVQLKAGVQTKFDLK.

Substrate is bound at residue 342–343 (WD). E480 (proton donor) is an active-site residue. Position 589 to 590 (589 to 590 (KQ)) interacts with substrate.

This sequence belongs to the glycosyl hydrolase 65 family. Monomer.

The enzyme catalyses alpha,alpha-trehalose 6-phosphate + phosphate = beta-D-glucose 1-phosphate + D-glucose 6-phosphate. In terms of biological role, catalyzes the conversion of trehalose 6-phosphate into glucose 1-phosphate and glucose 6-phosphate. The polypeptide is Trehalose 6-phosphate phosphorylase (trePP) (Lactococcus lactis subsp. lactis (strain IL1403) (Streptococcus lactis)).